The primary structure comprises 345 residues: GTPase Obg (345 aa).

The 159-residue stretch at 1–159 folds into the Obg domain; sequence MHFLDQAKIF…MWVWLRLKLL (159 aa). The tract at residues 121–142 is disordered; sequence GDGGRGNASYKTSTNRAPRQHG. An OBG-type G domain is found at 160–327; sequence ADCGLVGLPN…VLDKIIEILG (168 aa). GTP is bound by residues 166–173, 191–195, 212–215, 279–282, and 308–310; these read GLPNAGKS, FTTIR, DIPG, NKID, and SGA. Mg(2+)-binding residues include S173 and T193.

This sequence belongs to the TRAFAC class OBG-HflX-like GTPase superfamily. OBG GTPase family. In terms of assembly, monomer. Mg(2+) serves as cofactor.

Its subcellular location is the cytoplasm. An essential GTPase which binds GTP, GDP and possibly (p)ppGpp with moderate affinity, with high nucleotide exchange rates and a fairly low GTP hydrolysis rate. Plays a role in control of the cell cycle, stress response, ribosome biogenesis and in those bacteria that undergo differentiation, in morphogenesis control. The polypeptide is GTPase Obg (Rhizorhabdus wittichii (strain DSM 6014 / CCUG 31198 / JCM 15750 / NBRC 105917 / EY 4224 / RW1) (Sphingomonas wittichii)).